The following is a 259-amino-acid chain: MTLSLPQQGRLRAAVECRRITRRFAGQAVLDGLDLDIAPGEFVALLGSSGSGKTTLLRTLAGLEPIDQGQLQVPSAMAAVFQEPRLMPWKRVWRNVALGVRGAGARERAEAALEEVGLAHRLNAWPGTLSGGEAQRVALARALVREPHLLLLDEPFAALDALTRIRMHQLIIRLWRVHTPAVLLVTHDVDEALLLADRVLVLANGQIAEQLPIRLPRPRQASTPGFQALRARLLQLLGVETEAEPAVDISLPLSRTASR.

Residues 15 to 229 (VECRRITRRF…QASTPGFQAL (215 aa)) form the ABC transporter domain. Residue 47-54 (GSSGSGKT) coordinates ATP.

It belongs to the ABC transporter superfamily. Aliphatic sulfonates importer (TC 3.A.1.17.2) family. In terms of assembly, the complex is composed of two ATP-binding proteins (SsuB), two transmembrane proteins (SsuC) and a solute-binding protein (SsuA).

The protein resides in the cell inner membrane. It catalyses the reaction ATP + H2O + aliphatic sulfonate-[sulfonate-binding protein]Side 1 = ADP + phosphate + aliphatic sulfonateSide 2 + [sulfonate-binding protein]Side 1.. In terms of biological role, part of the ABC transporter complex SsuABC involved in aliphatic sulfonates import. Responsible for energy coupling to the transport system. This chain is Aliphatic sulfonates import ATP-binding protein SsuB 1, found in Pseudomonas fluorescens (strain ATCC BAA-477 / NRRL B-23932 / Pf-5).